The sequence spans 79 residues: Large ribosomal subunit protein bL31 (79 aa).

Belongs to the bacterial ribosomal protein bL31 family. Type A subfamily. Part of the 50S ribosomal subunit.

Binds the 23S rRNA. The protein is Large ribosomal subunit protein bL31 of Nostoc sp. (strain PCC 7120 / SAG 25.82 / UTEX 2576).